Consider the following 159-residue polypeptide: MNIQIVTVGKLKEKYLVQGIAEYLKRLSAYAKVTIVEVPDEKAPEVLSDAEMKQVKDKEGARILAKIPDDAHVIALAIDGKMKSSEEFAADLDKLATYGKSKVTFVIGGSLGLSEAVLKRSNERISFGRLTLPHQLMRLVLVEQVYRAFRIVRGEPYHK.

Residues Leu-76, Gly-108, and 127–132 (FGRLTL) each bind S-adenosyl-L-methionine.

It belongs to the RNA methyltransferase RlmH family. As to quaternary structure, homodimer.

The protein localises to the cytoplasm. It carries out the reaction pseudouridine(1915) in 23S rRNA + S-adenosyl-L-methionine = N(3)-methylpseudouridine(1915) in 23S rRNA + S-adenosyl-L-homocysteine + H(+). Functionally, specifically methylates the pseudouridine at position 1915 (m3Psi1915) in 23S rRNA. This Listeria monocytogenes serotype 4b (strain CLIP80459) protein is Ribosomal RNA large subunit methyltransferase H.